The chain runs to 411 residues: Dihydrosphingosine 1-phosphate phosphatase C823.11 (411 aa).

Residues 1-74 (MVHKKKNVDI…LDVYFMYTAT (74 aa)) are Lumenal-facing. A helical membrane pass occupies residues 75–95 (LGTHVFFMLALPIFFWSGCIY). The Cytoplasmic segment spans residues 96–99 (YTLD). Residues 100–120 (ITQLFAAGVYFSGCIKDYFCL) traverse the membrane as a helical segment. Residues 115-123 (KDYFCLPRP) form a phosphatase sequence motif I region. Residues 121–170 (PRPRSPPMVRLTLSSDAEYEYGFPSTHTTNAMATGFYSLFLLLSMSDSMS) lie on the Lumenal side of the membrane. The segment at 144–147 (PSTH) is phosphatase sequence motif II. His-147 serves as the catalytic Proton donor. Residues 171-191 (SISYYFLLSLVLLYIASISLG) form a helical membrane-spanning segment. The phosphatase sequence motif III stretch occupies residues 191–202 (GRIYCGMHGFMD). The Cytoplasmic segment spans residues 192–195 (RIYC). A helical membrane pass occupies residues 196–216 (GMHGFMDVSTGTILGVTLAIF). His-198 serves as the catalytic Nucleophile. Over 217–233 (QWKYADFFHNVWSSSST) the chain is Lumenal. Residues 234–254 (SVPILSVVLALFFIWFHPQPA) form a helical membrane-spanning segment. Over 255 to 259 (ERCIC) the chain is Cytoplasmic. Residues 260-280 (LEDSISFISVIMGIDLGTWFA) form a helical membrane-spanning segment. Residues 281-293 (SPESLSHLHDNLN) lie on the Lumenal side of the membrane. A helical membrane pass occupies residues 294 to 314 (SYFLLKFFVRVLFGVCMILIW). The Cytoplasmic segment spans residues 315-387 (KSFAKQALLA…VRFDIETIAR (73 aa)). A helical transmembrane segment spans residues 388-408 (IIVYSGIGFLCTYFAPKVFLK). Over 409–411 (WKI) the chain is Lumenal.

This sequence belongs to the type 2 lipid phosphate phosphatase family.

It localises to the endoplasmic reticulum membrane. Its function is as follows. Dihydrosphingosine 1-phosphate phosphatase required for efficient ceramide synthesis from exogenous sphingoid bases. Involved in endocytosis and calcium-mediated signaling. In Schizosaccharomyces pombe (strain 972 / ATCC 24843) (Fission yeast), this protein is Dihydrosphingosine 1-phosphate phosphatase C823.11.